We begin with the raw amino-acid sequence, 390 residues long: Protein phosphatase 1B (390 aa).

Residues 1–14 are compositionally biased toward basic and acidic residues; sequence MGAFLDKPKTEKHN. The tract at residues 1-20 is disordered; that stretch reads MGAFLDKPKTEKHNAHGAGN. Gly2 carries the N-myristoyl glycine lipid modification. A Glycyl lysine isopeptide (Lys-Gly) (interchain with G-Cter in ISG15) cross-link involves residue Lys12. The region spanning 23-295 is the PPM-type phosphatase domain; the sequence is RYGLSSMQGW…DNMSVVLVCF (273 aa). Residues Asp60, Gly61, Asp243, and Asp286 each coordinate Mn(2+). The segment at 371 to 390 is disordered; it reads NPHKDNDGGAGDLEDSLVAL. Ser386 is subject to Phosphoserine.

It belongs to the PP2C family. As to quaternary structure, monomer. Interacts with PAK6. Interacts with the phosphorylated form of IKBKB/IKKB. Mg(2+) is required as a cofactor. It depends on Mn(2+) as a cofactor. Post-translationally, isgylation negatively regulates its activity. N-myristoylation is essential for the recognition of its substrates for dephosphorylation. Isoform 1: Expressed ubiquitously. Isoform 2: Expressed exclusively in testis and intestine. Isoform 3: Expressed exclusively in brain and intestine. Isoform 4: Expressed exclusively in testis and intestine.

The protein localises to the cytoplasm. It localises to the cytosol. The protein resides in the membrane. It catalyses the reaction O-phospho-L-seryl-[protein] + H2O = L-seryl-[protein] + phosphate. It carries out the reaction O-phospho-L-threonyl-[protein] + H2O = L-threonyl-[protein] + phosphate. In terms of biological role, enzyme with a broad specificity. Dephosphorylates PRKAA1 and PRKAA2. Inhibits TBK1-mediated antiviral signaling by dephosphorylating it at 'Ser-172'. Plays an important role in the termination of TNF-alpha-mediated NF-kappa-B activation through dephosphorylating and inactivating IKBKB/IKKB. This is Protein phosphatase 1B (Ppm1b) from Mus musculus (Mouse).